A 240-amino-acid chain; its full sequence is Ribosomal RNA small subunit methyltransferase G (240 aa).

Residues Gly-79, 130–131 (AE), and Arg-149 contribute to the S-adenosyl-L-methionine site.

The protein belongs to the methyltransferase superfamily. RNA methyltransferase RsmG family.

It localises to the cytoplasm. Specifically methylates the N7 position of a guanine in 16S rRNA. The protein is Ribosomal RNA small subunit methyltransferase G of Moorella thermoacetica (strain ATCC 39073 / JCM 9320).